The following is a 329-amino-acid chain: Red chlorophyll catabolite reductase 1, chloroplastic (329 aa).

The segment covering 1–11 (MLQLRSPPPAT) has biased composition (pro residues). A chloroplast-targeting transit peptide spans 1-50 (MLQLRSPPPATSSPSSAVSFPTLAPRLLPLRRRRRGAGSQLGGKTSSAVR). Positions 1 to 61 (MLQLRSPPPA…SSAAAPGATE (61 aa)) are disordered. Low complexity-rich tracts occupy residues 12-28 (SSPS…PRLL) and 46-59 (SSAV…APGA). Residues glutamate 163, 216–218 (YRS), and aspartate 299 each bind red chlorophyll catabolite.

Expressed in leaves. Expressed at low levels in roots, stems, panicles and seeds.

It localises to the plastid. It is found in the chloroplast. It catalyses the reaction primary fluorescent chlorophyll catabolite + 2 oxidized [2Fe-2S]-[ferredoxin] = red chlorophyll catabolite + 2 reduced [2Fe-2S]-[ferredoxin] + 3 H(+). It participates in porphyrin-containing compound metabolism; chlorophyll degradation. Catalyzes the key reaction of chlorophyll catabolism, porphyrin macrocycle cleavage of pheophorbide a (pheide a) to a primary fluorescent catabolite (pFCC). Works in a two-step reaction with pheophorbide a oxygenase (PaO) by reducing the C20/C1 double bond of the intermediate, RCC. Belongs to the chlorophyll catabolic enzymes (CCEs). May play a role in senescence and response to wounding. The sequence is that of Red chlorophyll catabolite reductase 1, chloroplastic from Oryza sativa subsp. japonica (Rice).